We begin with the raw amino-acid sequence, 119 residues long: Fluoride-specific ion channel FluC (119 aa).

3 consecutive transmembrane segments (helical) span residues 37–54, 61–83, and 93–112; these read LFANWTGALLIGIFAETV, LLLITGFLGSLTTLSGFSLETVT, and ALSNIFLHTAGSLLLTWLGL. Residues Gly-69 and Thr-72 each coordinate Na(+).

This sequence belongs to the fluoride channel Fluc/FEX (TC 1.A.43) family.

It localises to the cell inner membrane. The catalysed reaction is fluoride(in) = fluoride(out). Na(+) is not transported, but it plays an essential structural role and its presence is essential for fluoride channel function. Fluoride-specific ion channel. Important for reducing fluoride concentration in the cell, thus reducing its toxicity. The polypeptide is Fluoride-specific ion channel FluC (Neisseria meningitidis serogroup C (strain 053442)).